Consider the following 336-residue polypeptide: Syntaxin-31 (336 aa).

The Cytoplasmic portion of the chain corresponds to methionine 1–arginine 314. Disordered regions lie at residues glycine 23 to arginine 53 and arginine 152 to arginine 218. Over residues glutamate 154–lysine 163 the composition is skewed to basic and acidic residues. A compositionally biased stretch (polar residues) spans glutamine 164–lysine 181. Over residues serine 190–proline 202 the composition is skewed to low complexity. Residues glutamate 244–histidine 306 form the t-SNARE coiled-coil homology domain. The chain crosses the membrane as a helical; Anchor for type IV membrane protein span at residues tryptophan 315–valine 335. Position 336 (alanine 336) is a topological domain, vesicular.

Belongs to the syntaxin family. As to quaternary structure, part of the t-SNARE complex. Interacts with CDC48A, but not with VPS45.

It is found in the golgi apparatus. The protein localises to the cis-Golgi network membrane. It localises to the cytoplasm. The protein resides in the endosome. Its function is as follows. Vesicle trafficking protein that functions in the secretory pathway. The chain is Syntaxin-31 (SYP31) from Arabidopsis thaliana (Mouse-ear cress).